Here is a 417-residue protein sequence, read N- to C-terminus: CinA-like protein (417 aa).

The protein belongs to the CinA family.

In Microcystis aeruginosa (strain NIES-843 / IAM M-2473), this protein is CinA-like protein.